Reading from the N-terminus, the 137-residue chain is Small ribosomal subunit protein bS6 (137 aa).

Belongs to the bacterial ribosomal protein bS6 family.

Functionally, binds together with bS18 to 16S ribosomal RNA. The sequence is that of Small ribosomal subunit protein bS6 from Mycoplasma mycoides subsp. mycoides SC (strain CCUG 32753 / NCTC 10114 / PG1).